The sequence spans 60 residues: MNSLQVLTKKVLIENKAFSEYHEDDIFILQQLGLWWTQSPGILIKLQGRSGKRINIPERS.

This sequence belongs to the asfivirus MGF 360 family.

Plays a role in virus cell tropism, and may be required for efficient virus replication in macrophages. The sequence is that of Protein MGF 360-5L from Ornithodoros (relapsing fever ticks).